We begin with the raw amino-acid sequence, 535 residues long: CTP synthase (535 aa).

An amidoligase domain region spans residues 1–267 (MTKFIFVTGG…DDIVIQRLQL (267 aa)). Ser-13 is a CTP binding site. UTP is bound at residue Ser-13. Residue 14 to 19 (SLGKGI) participates in ATP binding. L-glutamine is bound at residue Tyr-54. Residue Asp-71 coordinates ATP. Residues Asp-71 and Glu-141 each coordinate Mg(2+). CTP contacts are provided by residues 148–150 (DIE), 188–193 (KTKPTQ), and Lys-224. UTP contacts are provided by residues 188 to 193 (KTKPTQ) and Lys-224. 240–242 (RDA) serves as a coordination point for ATP. Residues 293–535 (TIGLVGKYVS…VEAALNYQQK (243 aa)) enclose the Glutamine amidotransferase type-1 domain. L-glutamine is bound at residue Gly-355. Cys-382 (nucleophile; for glutamine hydrolysis) is an active-site residue. L-glutamine-binding positions include 383–386 (LGMQ), Glu-406, and Arg-463. Catalysis depends on residues His-508 and Glu-510.

Belongs to the CTP synthase family. Homotetramer.

The catalysed reaction is UTP + L-glutamine + ATP + H2O = CTP + L-glutamate + ADP + phosphate + 2 H(+). It carries out the reaction L-glutamine + H2O = L-glutamate + NH4(+). The enzyme catalyses UTP + NH4(+) + ATP = CTP + ADP + phosphate + 2 H(+). It functions in the pathway pyrimidine metabolism; CTP biosynthesis via de novo pathway; CTP from UDP: step 2/2. Its activity is regulated as follows. Allosterically activated by GTP, when glutamine is the substrate; GTP has no effect on the reaction when ammonia is the substrate. The allosteric effector GTP functions by stabilizing the protein conformation that binds the tetrahedral intermediate(s) formed during glutamine hydrolysis. Inhibited by the product CTP, via allosteric rather than competitive inhibition. Its function is as follows. Catalyzes the ATP-dependent amination of UTP to CTP with either L-glutamine or ammonia as the source of nitrogen. Regulates intracellular CTP levels through interactions with the four ribonucleotide triphosphates. This chain is CTP synthase, found in Staphylococcus epidermidis (strain ATCC 35984 / DSM 28319 / BCRC 17069 / CCUG 31568 / BM 3577 / RP62A).